An 88-amino-acid polypeptide reads, in one-letter code: Small ribosomal subunit protein uS15 (88 aa).

This sequence belongs to the universal ribosomal protein uS15 family. In terms of assembly, part of the 30S ribosomal subunit. Forms a bridge to the 50S subunit in the 70S ribosome, contacting the 23S rRNA.

Functionally, one of the primary rRNA binding proteins, it binds directly to 16S rRNA where it helps nucleate assembly of the platform of the 30S subunit by binding and bridging several RNA helices of the 16S rRNA. In terms of biological role, forms an intersubunit bridge (bridge B4) with the 23S rRNA of the 50S subunit in the ribosome. This Mycoplasma mycoides subsp. mycoides SC (strain CCUG 32753 / NCTC 10114 / PG1) protein is Small ribosomal subunit protein uS15.